A 230-amino-acid chain; its full sequence is Orotidine 5'-phosphate decarboxylase (230 aa).

Residues aspartate 11, lysine 34, aspartate 61–threonine 70, threonine 117, arginine 179, glutamine 188, glycine 208, and arginine 209 each bind substrate. Lysine 63 acts as the Proton donor in catalysis.

It belongs to the OMP decarboxylase family. Type 1 subfamily. In terms of assembly, homodimer.

The enzyme catalyses orotidine 5'-phosphate + H(+) = UMP + CO2. It functions in the pathway pyrimidine metabolism; UMP biosynthesis via de novo pathway; UMP from orotate: step 2/2. Functionally, catalyzes the decarboxylation of orotidine 5'-monophosphate (OMP) to uridine 5'-monophosphate (UMP). In Streptococcus gordonii (strain Challis / ATCC 35105 / BCRC 15272 / CH1 / DL1 / V288), this protein is Orotidine 5'-phosphate decarboxylase.